The following is a 170-amino-acid chain: Ribosome-binding factor A (170 aa).

Residues 123 to 170 form a disordered region; the sequence is AKAGVYAGDEDPYVKPRVIGEDEDDDDEEGDEDGDDVDRSAPGYEPAH. Residues 143–158 are compositionally biased toward acidic residues; the sequence is EDEDDDDEEGDEDGDD.

The protein belongs to the RbfA family. Monomer. Binds 30S ribosomal subunits, but not 50S ribosomal subunits or 70S ribosomes.

The protein resides in the cytoplasm. One of several proteins that assist in the late maturation steps of the functional core of the 30S ribosomal subunit. Associates with free 30S ribosomal subunits (but not with 30S subunits that are part of 70S ribosomes or polysomes). Required for efficient processing of 16S rRNA. May interact with the 5'-terminal helix region of 16S rRNA. The protein is Ribosome-binding factor A of Clavibacter sepedonicus (Clavibacter michiganensis subsp. sepedonicus).